Consider the following 259-residue polypeptide: Phosphate import ATP-binding protein PstB 1 (259 aa).

The ABC transporter domain maps to Ile-13 to Ile-254. ATP is bound at residue Gly-45 to Ser-52.

Belongs to the ABC transporter superfamily. Phosphate importer (TC 3.A.1.7) family. The complex is composed of two ATP-binding proteins (PstB), two transmembrane proteins (PstC and PstA) and a solute-binding protein (PstS).

It localises to the cell inner membrane. The catalysed reaction is phosphate(out) + ATP + H2O = ADP + 2 phosphate(in) + H(+). Its function is as follows. Part of the ABC transporter complex PstSACB involved in phosphate import. Responsible for energy coupling to the transport system. This is Phosphate import ATP-binding protein PstB 1 from Pseudomonas savastanoi pv. phaseolicola (strain 1448A / Race 6) (Pseudomonas syringae pv. phaseolicola (strain 1448A / Race 6)).